We begin with the raw amino-acid sequence, 83 residues long: U5-theraphotoxin-Hs1a 4 (83 aa).

The signal sequence occupies residues 1-21; the sequence is MKTSMFLTLTGLVLLFVDCYA. A propeptide spanning residues 22 to 49 is cleaved from the precursor; that stretch reads SESEEKEFPKELLSSIFAADSDFKVEER. 3 cysteine pairs are disulfide-bonded: C51–C63, C56–C68, and C62–C75.

Belongs to the neurotoxin 10 (Hwtx-1) family. 51 (Hntx-8) subfamily. Hntx-8 sub-subfamily. As to expression, expressed by the venom gland.

Its subcellular location is the secreted. Functionally, agglutinates erythrocytes. This is U5-theraphotoxin-Hs1a 4 from Cyriopagopus schmidti (Chinese bird spider).